The following is a 402-amino-acid chain: Type II NADH:quinone oxidoreductase (402 aa).

Residues 12 to 16, 39 to 40, and Val83 each bind FAD; these read GAGYA and NK. Glu172 is a catalytic residue. Residues Asp302, 319 to 320, and Lys379 contribute to the FAD site; that span reads AQ.

This sequence belongs to the NADH dehydrogenase family. The cofactor is FAD.

The protein resides in the cell membrane. The enzyme catalyses a quinone + NADH + H(+) = a quinol + NAD(+). Functionally, alternative, nonproton pumping NADH:quinone oxidoreductase that delivers electrons to the respiratory chain by oxidation of NADH and reduction of quinones, and contributes to the regeneration of NAD(+). The protein is Type II NADH:quinone oxidoreductase of Staphylococcus aureus (strain bovine RF122 / ET3-1).